We begin with the raw amino-acid sequence, 196 residues long: GTP cyclohydrolase-2 (196 aa).

49 to 53 (RVHSE) serves as a coordination point for GTP. Zn(2+)-binding residues include Cys54, Cys65, and Cys67. GTP-binding positions include Gln70, 92–94 (EGR), and Thr114. Catalysis depends on Asp126, which acts as the Proton acceptor. The Nucleophile role is filled by Arg128. Positions 149 and 154 each coordinate GTP.

It belongs to the GTP cyclohydrolase II family. Homodimer. Zn(2+) serves as cofactor.

The catalysed reaction is GTP + 4 H2O = 2,5-diamino-6-hydroxy-4-(5-phosphoribosylamino)-pyrimidine + formate + 2 phosphate + 3 H(+). It participates in cofactor biosynthesis; riboflavin biosynthesis; 5-amino-6-(D-ribitylamino)uracil from GTP: step 1/4. Functionally, catalyzes the conversion of GTP to 2,5-diamino-6-ribosylamino-4(3H)-pyrimidinone 5'-phosphate (DARP), formate and pyrophosphate. This chain is GTP cyclohydrolase-2, found in Shigella boydii serotype 18 (strain CDC 3083-94 / BS512).